The primary structure comprises 404 residues: S-adenosylmethionine synthase (404 aa).

Glycine 141–aspartate 146 contributes to the ATP binding site.

The protein belongs to the AdoMet synthase 2 family. It depends on Mg(2+) as a cofactor.

The catalysed reaction is L-methionine + ATP + H2O = S-adenosyl-L-methionine + phosphate + diphosphate. It participates in amino-acid biosynthesis; S-adenosyl-L-methionine biosynthesis; S-adenosyl-L-methionine from L-methionine: step 1/1. In terms of biological role, catalyzes the formation of S-adenosylmethionine from methionine and ATP. This Methanococcus vannielii (strain ATCC 35089 / DSM 1224 / JCM 13029 / OCM 148 / SB) protein is S-adenosylmethionine synthase.